The sequence spans 273 residues: Cell division protein FtsQ (273 aa).

Residues 1 to 20 (MPPRKAHTTRRTPAKKSGVR) are Cytoplasmic-facing. A helical membrane pass occupies residues 21 to 43 (RRLLRLLVTGVPVLALCGVAWLW). Topologically, residues 44 to 273 (LESVRLTRIE…STQKSAMGHE (230 aa)) are periplasmic. The POTRA domain maps to 47 to 115 (VRLTRIEIVG…GTLRIAVEER (69 aa)).

Belongs to the FtsQ/DivIB family. FtsQ subfamily.

It localises to the cell inner membrane. In terms of biological role, essential cell division protein. This is Cell division protein FtsQ from Rhodothermus marinus (strain ATCC 43812 / DSM 4252 / R-10) (Rhodothermus obamensis).